The following is a 175-amino-acid chain: MEAWECLEDFSAVRNLLEQSSNSTSWFWRFLWGSSQAKLVCRIKEDYKWEFEELLKSCGELFDSLNLGHQALFQEKVIKTLDFSTPGRAAAAVAFLSFIKDKWSEETHLSGGYLLDFLAMHLWRAVVRHKNRLLLLSSVRPAIIPTEEQQQEEARRRRRQEQSPWNPRAGLDPRE.

A disordered region spans residues 147–175 (EEQQQEEARRRRRQEQSPWNPRAGLDPRE).

Belongs to the adenoviridae E1B 19 kDa protein family.

It is found in the host cell membrane. The protein localises to the host nucleus envelope. It localises to the host nucleus lamina. Its function is as follows. Putative adenovirus Bcl-2 homolog that inhibits apoptosis induced by TNF or FAS pathways, as well as p53-mediated apoptosis. Without E1B 19K function, virus production is compromised because of premature death of host cell. Interacts with Bax protein in cell lysates. This chain is E1B protein, small T-antigen (E1B), found in Homo sapiens (Human).